Consider the following 198-residue polypeptide: Ribonuclease HII 1 (198 aa).

The RNase H type-2 domain maps to 7–196 (ELTAGVDEAG…VRAALARAAA (190 aa)). A divalent metal cation-binding residues include Asp13, Glu14, and Asp105.

Belongs to the RNase HII family. It depends on Mn(2+) as a cofactor. The cofactor is Mg(2+).

The protein localises to the cytoplasm. The catalysed reaction is Endonucleolytic cleavage to 5'-phosphomonoester.. Functionally, endonuclease that specifically degrades the RNA of RNA-DNA hybrids. This Methylibium petroleiphilum (strain ATCC BAA-1232 / LMG 22953 / PM1) protein is Ribonuclease HII 1.